The chain runs to 470 residues: Tert-butanol monooxygenase / tert-amyl alcohol desaturase oxygenase subunit (470 aa).

Positions 51-155 constitute a Rieske domain; the sequence is WQPVCLSQEL…AFERNGLVFA (105 aa). Residues Cys-91, His-93, Cys-110, and His-113 each coordinate [2Fe-2S] cluster.

This sequence belongs to the bacterial ring-hydroxylating dioxygenase alpha subunit family. This two-component enzyme is composed of an oxygenase (MdpJ) and a reductase (MdpK). It depends on [2Fe-2S] cluster as a cofactor.

It carries out the reaction tert-butanol + NADPH + O2 + H(+) = 2-methylpropane-1,2-diol + NADP(+) + H2O. The enzyme catalyses 2-methylbutan-2-ol + NADPH + O2 + H(+) = 3-hydroxy-3-methylbut-1-ene + NADP(+) + 2 H2O. Oxygenase component of a two-component system involved in the degradation of tertiary alcohols such as tert-butyl alcohol (TBA) and tert-amyl alcohol (TAA). In the presence of TBA, catalyzes the hydroxylation of TBA to 2-methylpropane-1,2-diol. In the presence of TAA, functions as a desaturase, enabling the degradation of TAA and resulting in the formation of the hemiterpene 3-hydroxy-3-methylbut-1-ene. The specificity of the catalysis depends strongly on the molecule structure of the substrate, allowing either hydroxylation or desaturation reactions. Also catalyzes the desaturation of the tertiary alcohol 3-methyl-3-pentanol (a C6 homolog of TBA and TAA) to 3-methyl-1-penten-3-ol, with lower efficiency. In addition, can transform some secondary alcohols, including the hydroxylation of 2-propanol to 1,2-propanediol, and the desaturation of 2-butanol, 3-methyl-2-butanol and 3-pentanol. The polypeptide is Tert-butanol monooxygenase / tert-amyl alcohol desaturase oxygenase subunit (Aquincola tertiaricarbonis).